Here is a 171-residue protein sequence, read N- to C-terminus: uncharacterized protein (171 aa).

The signal sequence occupies residues 1–24 (MIFDSLTMTQSSLSLLLLTGAIFS). The Extracellular segment spans residues 25 to 70 (ISALYLTLFHRCATFSATSDLFLLVPLKFVSRDINDRLKTHYHHSC). The chain crosses the membrane as a helical span at residues 71-91 (LGSPFLCIIFLFISPLLNYHF). Residues 92-140 (RSLVRPPKIHQKGSIPTLTKNAETRCSHHLKQAAATGEVCKVVVIIKGH) are Cytoplasmic-facing. Residues 141 to 161 (ILKDCSIFFFIIFPLIYPLFI) traverse the membrane as a helical segment. Over 162–171 (NCSSKYNGLQ) the chain is Extracellular.

The protein resides in the membrane. This is an uncharacterized protein from Saccharomyces cerevisiae (strain ATCC 204508 / S288c) (Baker's yeast).